Consider the following 597-residue polypeptide: Golgin subfamily A member 8C (597 aa).

Disordered stretches follow at residues Met1–Ser80 and Lys96–Glu120. Residues Thr38–Gly50 are compositionally biased toward polar residues. Positions Ser53–Pro70 are enriched in low complexity. Coiled-coil stretches lie at residues Arg81–Leu141, Glu199–Val255, and Ser296–Leu394. Residues Lys100–Glu120 are compositionally biased toward basic and acidic residues. Disordered stretches follow at residues Leu390–Met422, Pro457–Ala498, and Pro549–Pro576. The span at Pro470–Gly483 shows a compositional bias: gly residues. Over residues Glu553 to Pro563 the composition is skewed to basic and acidic residues.

Belongs to the GOLGA8 family.

The sequence is that of Golgin subfamily A member 8C (GOLGA8CP) from Homo sapiens (Human).